Consider the following 305-residue polypeptide: MSISASLVKELRDLTGAGMMDCKAALAATEGKIEAAVDWLRAKGIAKADKKAGRTAAEGLVGVAASGNKAVVVEVNSETDFVARNDAFQELVRKIAQAALSTDGSSEAVANANVDGKTVTEAAKDAVATIGENISFRRSAALSVPQGVVATYIHNGVADGLGKLGVLVAIETAGDAEAAQAFGRQVAMHVAAVNPLALTSADVNPEAAEREKAIFIDQARQSGKPDNIIEKMVEGRMRKFYEEVVLLSQAFVINPDLTVEAALKDAEKAIGAPAKITGFARIALGEGIEKEESDFAAEVAAAAKG.

An involved in Mg(2+) ion dislocation from EF-Tu region spans residues 79–82 (TDFV).

This sequence belongs to the EF-Ts family.

The protein resides in the cytoplasm. Functionally, associates with the EF-Tu.GDP complex and induces the exchange of GDP to GTP. It remains bound to the aminoacyl-tRNA.EF-Tu.GTP complex up to the GTP hydrolysis stage on the ribosome. This is Elongation factor Ts from Brucella suis biovar 1 (strain 1330).